We begin with the raw amino-acid sequence, 341 residues long: Glyceraldehyde-3-phosphate dehydrogenase 1 (341 aa).

NAD(+)-binding positions include 13-14, Asp35, and Lys85; that span reads RI. D-glyceraldehyde 3-phosphate contacts are provided by residues 157 to 159, Thr188, 217 to 218, and Arg240; these read SCT and TG. Catalysis depends on Cys158, which acts as the Nucleophile. Asn322 is an NAD(+) binding site.

The protein belongs to the glyceraldehyde-3-phosphate dehydrogenase family. In terms of assembly, homotetramer.

The protein localises to the cytoplasm. The catalysed reaction is D-glyceraldehyde 3-phosphate + phosphate + NAD(+) = (2R)-3-phospho-glyceroyl phosphate + NADH + H(+). The protein operates within carbohydrate degradation; glycolysis; pyruvate from D-glyceraldehyde 3-phosphate: step 1/5. The chain is Glyceraldehyde-3-phosphate dehydrogenase 1 (gpd-1) from Caenorhabditis elegans.